Reading from the N-terminus, the 310-residue chain is Cell division protein FtsQ (310 aa).

The segment at 1-57 (MSEPENTAEDKDAEAAISADAVESETTADGGENPAEGESAEGPRMRARRERMERREA) is disordered. Topologically, residues 1-95 (MSEPENTAED…AGRGKVQGLQ (95 aa)) are cytoplasmic. Residues 96-116 (TLLLVVLLALIAVGLGSILYF) form a helical membrane-spanning segment. Residues 117-310 (TPLMSVRQTV…VSSPDLPTVK (194 aa)) are Extracellular-facing. Positions 120–188 (MSVRQTVVTG…STLRVTIVER (69 aa)) constitute a POTRA domain.

Belongs to the FtsQ/DivIB family. FtsQ subfamily.

It is found in the cell membrane. Its function is as follows. Essential cell division protein. This chain is Cell division protein FtsQ, found in Mycobacteroides abscessus (strain ATCC 19977 / DSM 44196 / CCUG 20993 / CIP 104536 / JCM 13569 / NCTC 13031 / TMC 1543 / L948) (Mycobacterium abscessus).